Consider the following 156-residue polypeptide: 6,7-dimethyl-8-ribityllumazine synthase (156 aa).

5-amino-6-(D-ribitylamino)uracil-binding positions include F22, 57 to 59, and 81 to 83; these read AYE and TVI. Position 86–87 (86–87) interacts with (2S)-2-hydroxy-3-oxobutyl phosphate; sequence GT. The active-site Proton donor is the H89. 5-amino-6-(D-ribitylamino)uracil is bound at residue F114. (2S)-2-hydroxy-3-oxobutyl phosphate is bound at residue R128.

It belongs to the DMRL synthase family. Forms an icosahedral capsid composed of 60 subunits, arranged as a dodecamer of pentamers.

The enzyme catalyses (2S)-2-hydroxy-3-oxobutyl phosphate + 5-amino-6-(D-ribitylamino)uracil = 6,7-dimethyl-8-(1-D-ribityl)lumazine + phosphate + 2 H2O + H(+). Its pathway is cofactor biosynthesis; riboflavin biosynthesis; riboflavin from 2-hydroxy-3-oxobutyl phosphate and 5-amino-6-(D-ribitylamino)uracil: step 1/2. Its function is as follows. Catalyzes the formation of 6,7-dimethyl-8-ribityllumazine by condensation of 5-amino-6-(D-ribitylamino)uracil with 3,4-dihydroxy-2-butanone 4-phosphate. This is the penultimate step in the biosynthesis of riboflavin. In Proteus mirabilis (strain HI4320), this protein is 6,7-dimethyl-8-ribityllumazine synthase.